A 156-amino-acid polypeptide reads, in one-letter code: UPF0587 protein (156 aa).

Cysteine 32, cysteine 35, cysteine 64, and cysteine 67 together coordinate Zn(2+).

It belongs to the UPF0587 family.

The polypeptide is UPF0587 protein (Dictyostelium discoideum (Social amoeba)).